A 188-amino-acid polypeptide reads, in one-letter code: Large ribosomal subunit protein eL18 (188 aa).

This sequence belongs to the eukaryotic ribosomal protein eL18 family.

The protein resides in the cytoplasm. The polypeptide is Large ribosomal subunit protein eL18 (RpL18) (Drosophila melanogaster (Fruit fly)).